The following is a 451-amino-acid chain: Aminodeoxychorismate synthase component 1 (451 aa).

L-tryptophan contacts are provided by residues Ser-34, 41 to 44 (HNRF), and 238 to 240 (PFS). Residue Glu-256 is the Proton donor of the active site. The active-site N6-(4-deoxychorismate)-lysine intermediate is the Lys-272.

It belongs to the anthranilate synthase component I family. In terms of assembly, monomer. Heterodimer consisting of two non-identical subunits: a glutamine amidotransferase subunit (PabA) and a aminodeoxychorismate synthase subunit (PabB). It depends on Mg(2+) as a cofactor.

The catalysed reaction is chorismate + L-glutamine = 4-amino-4-deoxychorismate + L-glutamate. It functions in the pathway cofactor biosynthesis; tetrahydrofolate biosynthesis; 4-aminobenzoate from chorismate: step 1/2. Part of a heterodimeric complex that catalyzes the two-step biosynthesis of 4-amino-4-deoxychorismate (ADC), a precursor of p-aminobenzoate (PABA) and tetrahydrofolate. In the first step, a glutamine amidotransferase (PabA) generates ammonia as a substrate that, along with chorismate, is used in the second step, catalyzed by aminodeoxychorismate synthase (PabB) to produce ADC. The protein is Aminodeoxychorismate synthase component 1 (pabB) of Klebsiella aerogenes (Enterobacter aerogenes).